The following is a 285-amino-acid chain: MNERENIIALIFDFDNTLIYGNMQQVLFDEYCVDSCSFWREVEGLEYVYKQNGYNIISNEMIYLSHFLTYVREGFFESLDNRALFNLGAKLRFFEGVIGLFDEISEINKKLENSKSQIKIYIVSSGFRQMILGSKIAPYVSKVWACEFIDSYLMPFYELRDDKFSKNKILSSVCYFVDHTIKTRVIFEINKGSYEKINERVPKSKRQIPFKNIFYIADGFSDVPAFEILNNILKHCRNTLTVYHGNDKNAKKLFYENRVGDFAEANYTKGTKLYNWIMEKICLSV.

This is an uncharacterized protein from Borreliella burgdorferi (strain ATCC 35210 / DSM 4680 / CIP 102532 / B31) (Borrelia burgdorferi).